Consider the following 211-residue polypeptide: 1-deoxy-D-xylulose 5-phosphate reductoisomerase (211 aa).

D14 is a Mn(2+) binding site. Positions 15, 16, 40, 63, 76, 81, 82, and 85 each coordinate 1-deoxy-D-xylulose 5-phosphate. Residue E16 coordinates Mn(2+). E85 is a binding site for Mn(2+).

Belongs to the DXR family. Requires Mn(2+) as cofactor. Mg(2+) serves as cofactor. In terms of tissue distribution, mostly expressed in flowers and, to a lower extent, in leaves.

The protein resides in the plastid. Its subcellular location is the chloroplast stroma. The enzyme catalyses 2-C-methyl-D-erythritol 4-phosphate + NADP(+) = 1-deoxy-D-xylulose 5-phosphate + NADPH + H(+). It functions in the pathway isoprenoid biosynthesis; isopentenyl diphosphate biosynthesis via DXP pathway; isopentenyl diphosphate from 1-deoxy-D-xylulose 5-phosphate: step 1/6. In terms of biological role, enzyme of the plastid non-mevalonate pathway for isoprenoid biosynthesis that catalyzes the NADPH-dependent rearrangement and reduction of 1-deoxy-D-xylulose-5-phosphate (DXP) to 2-C-methyl-D-erythritol 4-phosphate (MEP). Required for chloroplast development. This chain is 1-deoxy-D-xylulose 5-phosphate reductoisomerase, found in Thymus vulgaris (Thyme).